A 417-amino-acid polypeptide reads, in one-letter code: MFSRDLTIAKYDAELFEAMQQEALRQEEHIELIASENYTSPAVMEAQGSVLTNKYAEGYPGKRYYGGCEYVDVVEQLAIDRAKELFGADYANVQPHAGSQANAAVYLALLSAGDTILGMSLAHGGHLTHGASVSSSGKLYNAIQYGIDGNGLIDYDEVERLAVEHKPKMIVAGFSAYSQVLDFARFRAIADKVGAYLFVDMAHVAGLVAAGVYPNPVPFADVVTTTTHKTLRGPRGGLILARANADIEKKLNSAVFPGAQGGPLEHVIAAKAICFKEALQPEFKAYQQQVVKNAQAMASVFIERGFDVVSGGTQNHLFLLSLIKQEISGKDADAALGKAFITVNKNSVPNDPRSPFVTSGLRFGTPAVTTRGFKEAECKELAGWICDILADLNNEAVIDAVREKVKAICKKLPVYGN.

(6S)-5,6,7,8-tetrahydrofolate contacts are provided by residues Leu-121 and 125–127 (GHL). Lys-229 bears the N6-(pyridoxal phosphate)lysine mark. 354-356 (SPF) is a binding site for (6S)-5,6,7,8-tetrahydrofolate.

Belongs to the SHMT family. As to quaternary structure, homodimer. It depends on pyridoxal 5'-phosphate as a cofactor.

It is found in the cytoplasm. The catalysed reaction is (6R)-5,10-methylene-5,6,7,8-tetrahydrofolate + glycine + H2O = (6S)-5,6,7,8-tetrahydrofolate + L-serine. It participates in one-carbon metabolism; tetrahydrofolate interconversion. The protein operates within amino-acid biosynthesis; glycine biosynthesis; glycine from L-serine: step 1/1. Catalyzes the reversible interconversion of serine and glycine with tetrahydrofolate (THF) serving as the one-carbon carrier. This reaction serves as the major source of one-carbon groups required for the biosynthesis of purines, thymidylate, methionine, and other important biomolecules. Also exhibits THF-independent aldolase activity toward beta-hydroxyamino acids, producing glycine and aldehydes, via a retro-aldol mechanism. The protein is Serine hydroxymethyltransferase 2 of Pseudomonas putida (strain ATCC 47054 / DSM 6125 / CFBP 8728 / NCIMB 11950 / KT2440).